A 146-amino-acid polypeptide reads, in one-letter code: Large ribosomal subunit protein uL15 (146 aa).

Basic and acidic residues predominate over residues 1 to 13 (MKLNELKPNEGSR). Residues 1–54 (MKLNELKPNEGSRRNRKRVGRGTSSGYGKTAGRGQKGQLARTGGKTRLGFEGGQ) form a disordered region. Residues 23–35 (TSSGYGKTAGRGQ) are compositionally biased toward gly residues.

Belongs to the universal ribosomal protein uL15 family. Part of the 50S ribosomal subunit.

Functionally, binds to the 23S rRNA. The chain is Large ribosomal subunit protein uL15 from Lactobacillus johnsonii (strain CNCM I-12250 / La1 / NCC 533).